The sequence spans 88 residues: MLDVEAQEPPKGKWSTPPFDPRFPSQNQIRNCYQNFLDYHRCLKTRTRRGKSTQPCEYYFRVYHSLCPISWVESWNEQIKNGIFAGKI.

The segment at 1 to 22 (MLDVEAQEPPKGKWSTPPFDPR) is disordered. One can recognise a CHCH domain in the interval 29–75 (IRNCYQNFLDYHRCLKTRTRRGKSTQPCEYYFRVYHSLCPISWVESW). Residues 32-42 (CYQNFLDYHRC) carry the Cx9C motif motif. Intrachain disulfides connect Cys32–Cys67 and Cys42–Cys56. The Cx10C motif motif lies at 56–67 (CEYYFRVYHSLC).

The protein belongs to the cytochrome c oxidase subunit 6B family. As to quaternary structure, component of the cytochrome c oxidase (complex IV, CIV), a multisubunit enzyme composed of 14 subunits. The complex is composed of a catalytic core of 3 subunits MT-CO1, MT-CO2 and MT-CO3, encoded in the mitochondrial DNA, and 11 supernumerary subunits COX4I1 (or COX4I2), COX5A, COX5B, COX6A1 (or COX6A2), COX6B1 (or COX6B2), COX6C, COX7A2 (or COX7A1), COX7B, COX7C, COX8A and NDUFA4, which are encoded in the nuclear genome. The complex exists as a monomer or a dimer and forms supercomplexes (SCs) in the inner mitochondrial membrane with NADH-ubiquinone oxidoreductase (complex I, CI) and ubiquinol-cytochrome c oxidoreductase (cytochrome b-c1 complex, complex III, CIII), resulting in different assemblies (supercomplex SCI(1)III(2)IV(1) and megacomplex MCI(2)III(2)IV(2)). As to expression, testis specific. Weak expression in thymus and heart. Expressed in cancer cell lines.

It localises to the mitochondrion inner membrane. The protein operates within energy metabolism; oxidative phosphorylation. Component of the cytochrome c oxidase, the last enzyme in the mitochondrial electron transport chain which drives oxidative phosphorylation. The respiratory chain contains 3 multisubunit complexes succinate dehydrogenase (complex II, CII), ubiquinol-cytochrome c oxidoreductase (cytochrome b-c1 complex, complex III, CIII) and cytochrome c oxidase (complex IV, CIV), that cooperate to transfer electrons derived from NADH and succinate to molecular oxygen, creating an electrochemical gradient over the inner membrane that drives transmembrane transport and the ATP synthase. Cytochrome c oxidase is the component of the respiratory chain that catalyzes the reduction of oxygen to water. Electrons originating from reduced cytochrome c in the intermembrane space (IMS) are transferred via the dinuclear copper A center (CU(A)) of subunit 2 and heme A of subunit 1 to the active site in subunit 1, a binuclear center (BNC) formed by heme A3 and copper B (CU(B)). The BNC reduces molecular oxygen to 2 water molecules using 4 electrons from cytochrome c in the IMS and 4 protons from the mitochondrial matrix. The polypeptide is Cytochrome c oxidase subunit 6B2 (COX6B2) (Homo sapiens (Human)).